The sequence spans 579 residues: Glycine--tRNA ligase (579 aa).

Residue Glu175 coordinates glycine. Residues 207 to 209 (RNE) and 218 to 219 (RV) each bind ATP. Glycine is bound at residue Glu226. 327–328 (EC) serves as a coordination point for ATP. 442–444 (EPS) is a binding site for glycine. Arg449 lines the ATP pocket.

This sequence belongs to the class-II aminoacyl-tRNA synthetase family. In terms of assembly, homodimer.

It carries out the reaction tRNA(Gly) + glycine + ATP = glycyl-tRNA(Gly) + AMP + diphosphate. The enzyme catalyses 2 ATP + H(+) = P(1),P(4)-bis(5'-adenosyl) tetraphosphate + diphosphate. Catalyzes the ATP-dependent ligation of glycine to the 3'-end of its cognate tRNA, via the formation of an aminoacyl-adenylate intermediate (Gly-AMP). Also produces diadenosine tetraphosphate (Ap4A), a universal pleiotropic signaling molecule needed for cell regulation pathways, by direct condensation of 2 ATPs. Thereby, may play a special role in Ap4A homeostasis. The polypeptide is Glycine--tRNA ligase (Encephalitozoon cuniculi (strain GB-M1) (Microsporidian parasite)).